The sequence spans 146 residues: uncharacterized protein (146 aa).

The span at 86–96 shows a compositional bias: acidic residues; that stretch reads EFDSPMDEEEE. The segment at 86-124 is disordered; the sequence is EFDSPMDEEEETKPREASLDQTAPKKSKKEELLVKNNNF.

This is an uncharacterized protein from Ostreid herpesvirus 1 (isolate France) (OsHV-1).